The following is a 162-amino-acid chain: Putative 4-hydroxy-4-methyl-2-oxoglutarate aldolase (162 aa).

Substrate contacts are provided by residues 75–78 and R97; that span reads GDML. D98 lines the a divalent metal cation pocket.

Belongs to the class II aldolase/RraA-like family. Homotrimer. Requires a divalent metal cation as cofactor.

It carries out the reaction 4-hydroxy-4-methyl-2-oxoglutarate = 2 pyruvate. It catalyses the reaction oxaloacetate + H(+) = pyruvate + CO2. Functionally, catalyzes the aldol cleavage of 4-hydroxy-4-methyl-2-oxoglutarate (HMG) into 2 molecules of pyruvate. Also contains a secondary oxaloacetate (OAA) decarboxylase activity due to the common pyruvate enolate transition state formed following C-C bond cleavage in the retro-aldol and decarboxylation reactions. The sequence is that of Putative 4-hydroxy-4-methyl-2-oxoglutarate aldolase from Ectopseudomonas mendocina (strain ymp) (Pseudomonas mendocina).